An 834-amino-acid chain; its full sequence is DIS3-like exonuclease 2 (834 aa).

Positions 1 to 23 (MHNSEFLSPVQSGTQRGTNRSIL) are enriched in polar residues. Residues 1 to 35 (MHNSEFLSPVQSGTQRGTNRSILNNKKSGKGKKKS) form a disordered region. The Mg(2+) site is built by Asp354 and Asp363.

It belongs to the RNR ribonuclease family. DIS3L2 subfamily. Requires Mg(2+) as cofactor. The cofactor is Mn(2+).

Its subcellular location is the cytoplasm. It localises to the P-body. Its function is as follows. 3'-5'-exoribonuclease that specifically recognizes RNAs polyuridylated at their 3' end and mediates their degradation. Component of an exosome-independent RNA degradation pathway that mediates degradation of both mRNAs and miRNAs that have been polyuridylated by a terminal uridylyltransferase. Essential for correct mitosis, and negatively regulates cell proliferation. This Xenopus tropicalis (Western clawed frog) protein is DIS3-like exonuclease 2.